The sequence spans 329 residues: GTP 3',8-cyclase (329 aa).

In terms of domain architecture, Radical SAM core spans 8 to 234; it reads AFARKFYYLR…QLRQRSDGPA (227 aa). Residue Arg-17 participates in GTP binding. 2 residues coordinate [4Fe-4S] cluster: Cys-24 and Cys-28. S-adenosyl-L-methionine is bound at residue Tyr-30. Cys-31 contacts [4Fe-4S] cluster. Arg-68 is a GTP binding site. Gly-72 serves as a coordination point for S-adenosyl-L-methionine. Thr-99 contributes to the GTP binding site. S-adenosyl-L-methionine is bound at residue Ser-123. Residue Lys-160 coordinates GTP. Met-194 is an S-adenosyl-L-methionine binding site. Cys-257 and Cys-260 together coordinate [4Fe-4S] cluster. GTP is bound at residue 262–264; that stretch reads RLR. Cys-274 contributes to the [4Fe-4S] cluster binding site.

It belongs to the radical SAM superfamily. MoaA family. Monomer and homodimer. The cofactor is [4Fe-4S] cluster.

The catalysed reaction is GTP + AH2 + S-adenosyl-L-methionine = (8S)-3',8-cyclo-7,8-dihydroguanosine 5'-triphosphate + 5'-deoxyadenosine + L-methionine + A + H(+). It functions in the pathway cofactor biosynthesis; molybdopterin biosynthesis. Functionally, catalyzes the cyclization of GTP to (8S)-3',8-cyclo-7,8-dihydroguanosine 5'-triphosphate. The sequence is that of GTP 3',8-cyclase from Salmonella paratyphi B (strain ATCC BAA-1250 / SPB7).